We begin with the raw amino-acid sequence, 443 residues long: Methyl-coenzyme M reductase I subunit beta (443 aa).

Residue Tyr367 coordinates coenzyme M. Residue Gly369 participates in coenzyme B binding.

The protein belongs to the methyl-coenzyme M reductase beta subunit family. MCR is a hexamer of two alpha, two beta, and two gamma chains, forming a dimer of heterotrimers. Requires coenzyme F430 as cofactor.

It localises to the cytoplasm. The catalysed reaction is coenzyme B + methyl-coenzyme M = methane + coenzyme M-coenzyme B heterodisulfide. The protein operates within one-carbon metabolism; methyl-coenzyme M reduction; methane from methyl-coenzyme M: step 1/1. Methyl-coenzyme M reductase activity is inhibited by 3-nitrooxypropanol (3-NOP) in vitro and in vivo, by oxidation of its active site Ni(I), which stops both growth and methanogenesis. Is also inhibited by the reaction product CoM-S-S-CoB. Functionally, component of the methyl-coenzyme M reductase (MCR) I that catalyzes the reductive cleavage of methyl-coenzyme M (CoM-S-CH3 or 2-(methylthio)ethanesulfonate) using coenzyme B (CoB or 7-mercaptoheptanoylthreonine phosphate) as reductant which results in the production of methane and the mixed heterodisulfide of CoB and CoM (CoM-S-S-CoB). This is the final step in methanogenesis. Neither N-6-mercaptohexanoylthreonine phosphate (H-S-HxoTP) nor N-8-mercaptooctanoylthreonine phosphate (H-SOcoTP) nor any other thiol compound such as CoA or CoM can substitute for CoB as the electron donor. The chain is Methyl-coenzyme M reductase I subunit beta (mcrB) from Methanothermobacter marburgensis (strain ATCC BAA-927 / DSM 2133 / JCM 14651 / NBRC 100331 / OCM 82 / Marburg) (Methanobacterium thermoautotrophicum).